The primary structure comprises 396 residues: MKNSLFLIKDFISKETLSGLILFVVTVLAVTIANSDFGSYYFELFSTQLGINFGQLNASMSLLHWINDVLMAIFFLVVGLEIKREMLIGELSSVKKASFPIIAAIGGMIVPAILYISLNPDHITGFGVPMATDIAFALGILMLLGNKVNPAIKLFLVTLAVVDDLGAIVVVAIFYTNELHFEYFLYAFAVYSIIWFLNYKNVQKLTPYIILGVFLWIFIHKTGIHSTIAGVLLAFAIPLNKKADLEESVENLSVDNPLVKLEHALHNFSAFIIMPLFAFANAGVIIDFSNVIEHQLIVLGVALGLIIGKPIGIFSFTYLATKLKISVKPENVTWNDIFAVGFLGGIGFTMSIFISHLAFSDQTIVGAVKLGIFASSVIAAIIGSVLLILKAKKVEP.

Transmembrane regions (helical) follow at residues 17–37 (LSGLILFVVTVLAVTIANSDF), 62–82 (LLHWINDVLMAIFFLVVGLEI), 98–118 (SFPIIAAIGGMIVPAILYISL), 125–145 (GFGVPMATDIAFALGILMLLG), 154–174 (LFLVTLAVVDDLGAIVVVAIF), 179–199 (LHFEYFLYAFAVYSIIWFLNY), 209–229 (IILGVFLWIFIHKTGIHSTIA), 268–288 (FSAFIIMPLFAFANAGVIIDF), 296–316 (LIVLGVALGLIIGKPIGIFSF), 337–357 (IFAVGFLGGIGFTMSIFISHL), and 368–388 (VKLGIFASSVIAAIIGSVLLI).

The protein belongs to the NhaA Na(+)/H(+) (TC 2.A.33) antiporter family.

It is found in the cell inner membrane. The catalysed reaction is Na(+)(in) + 2 H(+)(out) = Na(+)(out) + 2 H(+)(in). In terms of biological role, na(+)/H(+) antiporter that extrudes sodium in exchange for external protons. This chain is Na(+)/H(+) antiporter NhaA 2, found in Aliarcobacter butzleri (strain RM4018) (Arcobacter butzleri).